A 229-amino-acid polypeptide reads, in one-letter code: GTP cyclohydrolase 1 (229 aa).

Residues Met-1–Glu-26 form a disordered region. Residues Cys-118, His-121, and Cys-189 each coordinate Zn(2+).

The protein belongs to the GTP cyclohydrolase I family. In terms of assembly, toroid-shaped homodecamer, composed of two pentamers of five dimers.

The enzyme catalyses GTP + H2O = 7,8-dihydroneopterin 3'-triphosphate + formate + H(+). It functions in the pathway cofactor biosynthesis; 7,8-dihydroneopterin triphosphate biosynthesis; 7,8-dihydroneopterin triphosphate from GTP: step 1/1. The protein is GTP cyclohydrolase 1 of Rhodopseudomonas palustris (strain ATCC BAA-98 / CGA009).